Here is a 500-residue protein sequence, read N- to C-terminus: Cytochrome P450 monooxygenase ausR (500 aa).

Residues 15-35 (GVGLYILWTVAVLFVIFKLLA) form a helical membrane-spanning segment. C439 contacts heme.

It belongs to the cytochrome P450 family. Requires heme as cofactor.

The protein localises to the membrane. It functions in the pathway secondary metabolite biosynthesis; terpenoid biosynthesis. Its function is as follows. Cytochrome P450 monooxygenase; part of the gene cluster that mediates the biosynthesis of calidodehydroaustin, a fungal meroterpenoid. The first step of the pathway is the synthesis of 3,5-dimethylorsellinic acid by the polyketide synthase ausA. 3,5-dimethylorsellinic acid is then prenylated by the polyprenyl transferase ausN. Further epoxidation by the FAD-dependent monooxygenase ausM and cyclization by the probable terpene cyclase ausL lead to the formation of protoaustinoid A. Protoaustinoid A is then oxidized to spiro-lactone preaustinoid A3 by the combined action of the FAD-binding monooxygenases ausB and ausC, and the dioxygenase ausE. Acid-catalyzed keto-rearrangement and ring contraction of the tetraketide portion of preaustinoid A3 by ausJ lead to the formation of preaustinoid A4. The aldo-keto reductase ausK, with the help of ausH, is involved in the next step by transforming preaustinoid A4 into isoaustinone which is in turn hydroxylated by the P450 monooxygenase ausI to form austinolide. The cytochrome P450 monooxygenase ausG modifies austinolide to austinol. Austinol is further acetylated to austin by the O-acetyltransferase ausP, which spontaneously changes to dehydroaustin. The cytochrome P450 monooxygenase ausR then converts dehydroaustin is into 7-dehydrodehydroaustin. The hydroxylation catalyzed by ausR permits the O-acetyltransferase ausQ to add an additional acetyl group to the molecule, leading to the formation of acetoxydehydroaustin. The short chain dehydrogenase ausT catalyzes the reduction of the double bond present between carbon atoms 1 and 2 to convert 7-dehydrodehydroaustin into 1,2-dihydro-7-hydroxydehydroaustin. AusQ catalyzes not only an acetylation reaction but also the addition of the PKS ausV diketide product to 1,2-dihydro-7-hydroxydehydroaustin, forming precalidodehydroaustin. Finally, the iron/alpha-ketoglutarate-dependent dioxygenase converts precalidodehydroaustin into calidodehydroaustin. In Aspergillus calidoustus, this protein is Cytochrome P450 monooxygenase ausR.